A 594-amino-acid chain; its full sequence is Aspartate--tRNA(Asp/Asn) ligase (594 aa).

L-aspartate is bound at residue Glu175. The aspartate stretch occupies residues 199 to 202; it reads QQFK. L-aspartate is bound by residues Arg221 and His455. 221–223 is an ATP binding site; sequence RDE. Residue Glu489 coordinates ATP. Arg496 provides a ligand contact to L-aspartate. Residue 541-544 participates in ATP binding; that stretch reads GIDR.

This sequence belongs to the class-II aminoacyl-tRNA synthetase family. Type 1 subfamily. As to quaternary structure, homodimer.

The protein resides in the cytoplasm. It catalyses the reaction tRNA(Asx) + L-aspartate + ATP = L-aspartyl-tRNA(Asx) + AMP + diphosphate. In terms of biological role, aspartyl-tRNA synthetase with relaxed tRNA specificity since it is able to aspartylate not only its cognate tRNA(Asp) but also tRNA(Asn). Reaction proceeds in two steps: L-aspartate is first activated by ATP to form Asp-AMP and then transferred to the acceptor end of tRNA(Asp/Asn). This chain is Aspartate--tRNA(Asp/Asn) ligase, found in Pelagibacter ubique (strain HTCC1062).